We begin with the raw amino-acid sequence, 632 residues long: Chaperone protein HtpG (632 aa).

An a; substrate-binding region spans residues 1–339 (MTQQTMSFQA…SSDLPLNVSR (339 aa)). Positions 340–559 (EILQESRDVK…DNDMSGYLQR (220 aa)) are b. Positions 560–632 (MLKAAGQSAP…TNALLLSRAA (73 aa)) are c.

It belongs to the heat shock protein 90 family. In terms of assembly, homodimer.

It is found in the cytoplasm. Molecular chaperone. Has ATPase activity. The chain is Chaperone protein HtpG from Burkholderia mallei (strain NCTC 10247).